The chain runs to 146 residues: Hemoglobin subunit beta (146 aa).

An N-acetylvaline modification is found at valine 1. In terms of domain architecture, Globin spans 2 to 146 (HLSAEEKAAV…VANALAHKYH (145 aa)). Position 12 is a phosphothreonine (threonine 12). Position 44 is a phosphoserine (serine 44). At lysine 59 the chain carries N6-acetyllysine. A heme b-binding site is contributed by histidine 63. N6-acetyllysine is present on lysine 82. Histidine 92 serves as a coordination point for heme b. S-nitrosocysteine is present on cysteine 93. An N6-acetyllysine modification is found at lysine 144.

The protein belongs to the globin family. As to quaternary structure, heterotetramer of two alpha chains and two beta chains. Red blood cells.

Involved in oxygen transport from the lung to the various peripheral tissues. In Ctenodactylus gundi (Northern gundi), this protein is Hemoglobin subunit beta (HBB).